Consider the following 427-residue polypeptide: Protein TolB homolog (427 aa).

The signal sequence occupies residues 1–20; sequence MLRRIFVSTFLVFGIVSLYA.

The protein belongs to the TolB family.

The protein localises to the periplasm. This Chlamydia caviae (strain ATCC VR-813 / DSM 19441 / 03DC25 / GPIC) (Chlamydophila caviae) protein is Protein TolB homolog.